We begin with the raw amino-acid sequence, 336 residues long: Anthranilate phosphoribosyltransferase (336 aa).

5-phospho-alpha-D-ribose 1-diphosphate-binding positions include G79, 82-83 (GD), T87, 89-92 (NISS), 107-115 (KHGNRSVSS), and S119. Residue G79 coordinates anthranilate. S91 lines the Mg(2+) pocket. N110 is an anthranilate binding site. Anthranilate is bound at residue R165. Positions 223 and 224 each coordinate Mg(2+).

The protein belongs to the anthranilate phosphoribosyltransferase family. Homodimer. Requires Mg(2+) as cofactor.

The enzyme catalyses N-(5-phospho-beta-D-ribosyl)anthranilate + diphosphate = 5-phospho-alpha-D-ribose 1-diphosphate + anthranilate. It functions in the pathway amino-acid biosynthesis; L-tryptophan biosynthesis; L-tryptophan from chorismate: step 2/5. Its function is as follows. Catalyzes the transfer of the phosphoribosyl group of 5-phosphorylribose-1-pyrophosphate (PRPP) to anthranilate to yield N-(5'-phosphoribosyl)-anthranilate (PRA). In Tolumonas auensis (strain DSM 9187 / NBRC 110442 / TA 4), this protein is Anthranilate phosphoribosyltransferase.